The following is a 374-amino-acid chain: Lactoyl-CoA dehydratase subunit beta (374 aa).

The protein belongs to the FldB/FldC dehydratase alpha/beta subunit family. As to quaternary structure, heterodimer of an alpha (LcdA) and a beta (LcdB) subunit. [4Fe-4S] cluster is required as a cofactor. The cofactor is FMN. It depends on riboflavin as a cofactor. Requires Mg(2+) as cofactor.

The enzyme catalyses (R)-lactoyl-CoA = acryloyl-CoA + H2O. The catalysed reaction is (2R)-hydroxybutanoyl-CoA = (2E)-butenoyl-CoA + H2O. Activated by the LcdC protein. Functionally, involved in the acrylate pathway for the conversion of D-lactic acid to propionic acid. Catalyzes the reversible dehydration of Lactoyl-CoA and 2-hydroxybutyroyl-CoA to acryloyl-CoA and crotonyl-CoA, respectively. The protein is Lactoyl-CoA dehydratase subunit beta (lcdB) of Anaerotignum propionicum (Clostridium propionicum).